We begin with the raw amino-acid sequence, 764 residues long: Polyribonucleotide nucleotidyltransferase (764 aa).

Residues Asp555 and Asp561 each coordinate Mg(2+). In terms of domain architecture, KH spans 621-680; it reads PHITSINIPQNKIGEVIGPKGKTINQITEETGANITIEDDGTVFISAVGGESAREAEEKI. Positions 692-761 constitute an S1 motif domain; the sequence is GDRFLGTVVK…NRGKISLVLV (70 aa).

Belongs to the polyribonucleotide nucleotidyltransferase family. Mg(2+) is required as a cofactor.

Its subcellular location is the cytoplasm. It catalyses the reaction RNA(n+1) + phosphate = RNA(n) + a ribonucleoside 5'-diphosphate. Involved in mRNA degradation. Catalyzes the phosphorolysis of single-stranded polyribonucleotides processively in the 3'- to 5'-direction. The sequence is that of Polyribonucleotide nucleotidyltransferase from Corynebacterium jeikeium (strain K411).